Here is a 240-residue protein sequence, read N- to C-terminus: Enolase-phosphatase E1 (240 aa).

The protein belongs to the HAD-like hydrolase superfamily. MasA/MtnC family. Monomer. Mg(2+) serves as cofactor.

The enzyme catalyses 5-methylsulfanyl-2,3-dioxopentyl phosphate + H2O = 1,2-dihydroxy-5-(methylsulfanyl)pent-1-en-3-one + phosphate. It participates in amino-acid biosynthesis; L-methionine biosynthesis via salvage pathway; L-methionine from S-methyl-5-thio-alpha-D-ribose 1-phosphate: step 3/6. Its pathway is amino-acid biosynthesis; L-methionine biosynthesis via salvage pathway; L-methionine from S-methyl-5-thio-alpha-D-ribose 1-phosphate: step 4/6. In terms of biological role, bifunctional enzyme that catalyzes the enolization of 2,3-diketo-5-methylthiopentyl-1-phosphate (DK-MTP-1-P) into the intermediate 2-hydroxy-3-keto-5-methylthiopentenyl-1-phosphate (HK-MTPenyl-1-P), which is then dephosphorylated to form the acireductone 1,2-dihydroxy-3-keto-5-methylthiopentene (DHK-MTPene). The polypeptide is Enolase-phosphatase E1 (Saccharopolyspora erythraea (strain ATCC 11635 / DSM 40517 / JCM 4748 / NBRC 13426 / NCIMB 8594 / NRRL 2338)).